Here is a 321-residue protein sequence, read N- to C-terminus: Ribosomal RNA small subunit methyltransferase H (321 aa).

Residues 43–45 (GGH), aspartate 63, phenylalanine 89, aspartate 110, and glutamine 117 each bind S-adenosyl-L-methionine. Positions 286–321 (HPAGKALRAGPRETRDNPRSRSAVLRVAERSERHAA) are disordered. 2 stretches are compositionally biased toward basic and acidic residues: residues 295–304 (GPRETRDNPR) and 312–321 (VAERSERHAA).

This sequence belongs to the methyltransferase superfamily. RsmH family.

The protein resides in the cytoplasm. The catalysed reaction is cytidine(1402) in 16S rRNA + S-adenosyl-L-methionine = N(4)-methylcytidine(1402) in 16S rRNA + S-adenosyl-L-homocysteine + H(+). Its function is as follows. Specifically methylates the N4 position of cytidine in position 1402 (C1402) of 16S rRNA. This is Ribosomal RNA small subunit methyltransferase H from Acidithiobacillus ferrooxidans (strain ATCC 23270 / DSM 14882 / CIP 104768 / NCIMB 8455) (Ferrobacillus ferrooxidans (strain ATCC 23270)).